The primary structure comprises 201 residues: uncharacterized protein (201 aa).

The tract at residues 1–22 (MAASKAAKSSEDRAGGGGGGGG) is disordered.

This is an uncharacterized protein from Tomato ringspot virus (isolate raspberry) (ToRSV).